Here is a 281-residue protein sequence, read N- to C-terminus: Pantothenate synthetase (281 aa).

30-37 provides a ligand contact to ATP; the sequence is MGALHHGH. The active-site Proton donor is H37. Residue Q61 participates in (R)-pantoate binding. Q61 contributes to the beta-alanine binding site. 147–150 contacts ATP; the sequence is GEKD. (R)-pantoate is bound at residue Q153. ATP-binding positions include L176 and 184–187; that span reads SSSR.

Belongs to the pantothenate synthetase family. As to quaternary structure, homodimer.

The protein localises to the cytoplasm. The catalysed reaction is (R)-pantoate + beta-alanine + ATP = (R)-pantothenate + AMP + diphosphate + H(+). The protein operates within cofactor biosynthesis; (R)-pantothenate biosynthesis; (R)-pantothenate from (R)-pantoate and beta-alanine: step 1/1. Functionally, catalyzes the condensation of pantoate with beta-alanine in an ATP-dependent reaction via a pantoyl-adenylate intermediate. This is Pantothenate synthetase from Bartonella bacilliformis (strain ATCC 35685 / KC583 / Herrer 020/F12,63).